Consider the following 87-residue polypeptide: Mu-theraphotoxin-Hs1a (87 aa).

The first 24 residues, 1–24, serve as a signal peptide directing secretion; that stretch reads MVNMKASMFLTFAGLVLLFVVCYA. Residues 25–52 constitute a propeptide that is removed on maturation; it reads SESEEKEFPKEMLSSIFAVDNDFKQEER. Intrachain disulfides connect cysteine 54-cysteine 67, cysteine 61-cysteine 72, and cysteine 66-cysteine 79.

It belongs to the neurotoxin 10 (Hwtx-1) family. 51 (Hntx-8) subfamily. Hntx-8 sub-subfamily. In terms of tissue distribution, expressed by the venom gland.

It localises to the secreted. Functionally, probable sodium channel pore blocker that dose-dependently inhibits voltage-gated sodium channels (VGSC) on DUM neurons in a way similar to tetrodotoxin. Has no effect on the kinetics of activation and inactivation. Seems not to interact with VGSC in an inactivated state. In vivo, reversibly paralyzes cockroaches, and can enhance the muscular contraction elicited by stimulating its nerve. The polypeptide is Mu-theraphotoxin-Hs1a (Cyriopagopus schmidti (Chinese bird spider)).